The chain runs to 359 residues: Cytochrome c oxidase subunit 2 (359 aa).

The N-terminal stretch at 1-28 (MEQQNKRGLKRKALLGGVLGLGGLAMAG) is a signal peptide. Cys29 is lipidated: S-diacylglycerol cysteine. The next 2 helical transmembrane spans lie at 64–84 (VWVA…TAIF) and 107–127 (VPLE…LFFF). The disordered stretch occupies residues 168–203 (PGGQDYQGSDPERQAAAEASKKDPSGDNPIHGNSKS). Over residues 177–192 (DPERQAAAEASKKDPS) the composition is skewed to basic and acidic residues. Cu cation-binding residues include His244, Cys285, Glu287, Cys289, His293, and Met296. The tract at residues 335-359 (YATSTSPFVSDRTATRDGENTQSNA) is disordered.

Associates with subunits I, III and IV to form cytochrome c oxidase. The 4 subunit cytochrome c oxidase forms a supercomplex with the menaquinol-cytochrome c reductase complex (cytochrome bc1). Binuclear copper center (CuA) serves as cofactor.

Its subcellular location is the cell membrane. It carries out the reaction 4 Fe(II)-[cytochrome c] + O2 + 8 H(+)(in) = 4 Fe(III)-[cytochrome c] + 2 H2O + 4 H(+)(out). Its function is as follows. Subunits I and II form the functional core of the enzyme complex. Electrons originating in cytochrome c are transferred via heme a and Cu(A) to the binuclear center formed by heme a3 and Cu(B). The protein is Cytochrome c oxidase subunit 2 (ctaC) of Corynebacterium glutamicum (strain ATCC 13032 / DSM 20300 / JCM 1318 / BCRC 11384 / CCUG 27702 / LMG 3730 / NBRC 12168 / NCIMB 10025 / NRRL B-2784 / 534).